The following is a 93-amino-acid chain: Large ribosomal subunit protein bL31B (93 aa).

It belongs to the bacterial ribosomal protein bL31 family. Type B subfamily. As to quaternary structure, part of the 50S ribosomal subunit.

This is Large ribosomal subunit protein bL31B from Psychrobacter cryohalolentis (strain ATCC BAA-1226 / DSM 17306 / VKM B-2378 / K5).